The chain runs to 593 residues: Arginine--tRNA ligase (593 aa).

The short motif at 138-148 (ANPTGPLHVGH) is the 'HIGH' region element.

It belongs to the class-I aminoacyl-tRNA synthetase family. In terms of assembly, monomer.

The protein localises to the cytoplasm. The catalysed reaction is tRNA(Arg) + L-arginine + ATP = L-arginyl-tRNA(Arg) + AMP + diphosphate. This chain is Arginine--tRNA ligase, found in Burkholderia cenocepacia (strain ATCC BAA-245 / DSM 16553 / LMG 16656 / NCTC 13227 / J2315 / CF5610) (Burkholderia cepacia (strain J2315)).